A 309-amino-acid polypeptide reads, in one-letter code: Probable cell wall protein PGA50 (309 aa).

Positions 1 to 17 are cleaved as a signal peptide; sequence MKLNLLLLLFIVELVAA. N-linked (GlcNAc...) asparagine glycans are attached at residues asparagine 67, asparagine 115, asparagine 248, asparagine 267, and asparagine 277. The interval 241 to 281 is disordered; that stretch reads STTTFSSNGTSSGTTNGDTRAETKSSNSTQTSSSDKNSSQI. The GPI-anchor amidated serine moiety is linked to residue serine 286. Positions 287–309 are cleaved as a propeptide — removed in mature form; it reads TGVANFVASFGMGTLLLFVLSLC.

The protein belongs to the IHD1 family. Post-translationally, the GPI-anchor is attached to the protein in the endoplasmic reticulum and serves to target the protein to the cell surface. There, the glucosamine-inositol phospholipid moiety is cleaved off and the GPI-modified mannoprotein is covalently attached via its lipidless GPI glycan remnant to the 1,6-beta-glucan of the outer cell wall layer.

The protein resides in the secreted. The protein localises to the cell wall. It localises to the membrane. Probable GPI-anchored cell wall protein that may be involved in cell wall organization, hyphal growth, as well as in virulence. This is Probable cell wall protein PGA50 (PGA50) from Candida albicans (strain SC5314 / ATCC MYA-2876) (Yeast).